We begin with the raw amino-acid sequence, 177 residues long: Early nodulin-like protein 15 (177 aa).

The first 24 residues, 1-24 (MASSSLLVTIFLCISVFFFSSVNA), serve as a signal peptide directing secretion. The region spanning 25–129 (NEVTVGGKSG…GQKLRLVVIT (105 aa)) is the Phytocyanin domain. Cysteines 83 and 117 form a disulfide. N-linked (GlcNAc...) asparagine glycosylation is present at asparagine 84. Serine 153 is lipidated: GPI-anchor amidated serine. Positions 154–177 (GAAKLAGGFSVVFGLVLGLWAFFF) are cleaved as a propeptide — removed in mature form.

This sequence belongs to the early nodulin-like (ENODL) family. Mostly expressed in seedlings, siliques and flowers, and, to a lower extent, in roots, stems and seeds, but barely in leaves.

The protein localises to the cell membrane. Its function is as follows. May act as a carbohydrate transporter. Required, together with ENODL11, ENODL12, ENODL13, ENODL14 and ENODL15, for male-female communication and pollen tube reception and burst at the synergid cell surface of the female gametophyte. This Arabidopsis thaliana (Mouse-ear cress) protein is Early nodulin-like protein 15.